We begin with the raw amino-acid sequence, 421 residues long: Probable sugar-binding periplasmic protein (421 aa).

The signal sequence occupies residues Met-1–Ala-27.

It belongs to the bacterial solute-binding protein 1 family.

Its subcellular location is the periplasm. Its function is as follows. Part of a binding-protein-dependent transport system for a sugar. This is Probable sugar-binding periplasmic protein from Brucella suis biovar 1 (strain 1330).